The chain runs to 76 residues: Conotoxin VnMEKL-012 (76 aa).

A signal peptide spans 1–18; that stretch reads MKLTILFLVAAVLMSTQA. Positions 19 to 42 are excised as a propeptide; sequence LIQHDGEKSQKAKMKFLTARTLSA. Disulfide bonds link Cys49–Cys65, Cys56–Cys70, and Cys64–Cys74.

It belongs to the conotoxin O2 superfamily. In terms of tissue distribution, expressed by the venom duct.

It localises to the secreted. The polypeptide is Conotoxin VnMEKL-012 (Conus ventricosus (Mediterranean cone)).